The sequence spans 53 residues: uncharacterized protein (53 aa).

This sequence belongs to the ycf15 family.

The protein localises to the plastid. It is found in the chloroplast. This is an uncharacterized protein from Helianthus annuus (Common sunflower).